A 660-amino-acid chain; its full sequence is MALLGIKLMTLVFAAWLSCCHSSSALPSSGLSGPCLNHSCLLRNSLNGASQWGTILHSPAVGSNCPPCPMMSIMGCSPPKPLQSNSYGVLCSTIASKAKQDLKLCWKEVQTRSEMYSKRISAALIDSLHQAVGMLLMIIIWIWSSIFLVVYHVLAYMTTYHLSSAVCVGFLIFCTICAFRLISWICGDLLAFNVSGLTPIWVNFSESSCPAGLSLRRYKNEKTVEGYKPFIIPQKSPKKSVIELSFSNGSHLGYATCVRLWDGSICLMTAKHCLVKEALLKGRVAGHSLPVKNFDLFLTCDEIDFSLLRGPKQWEAYLGVKGADLITSNRIGRSPVTFYNLSKDGEWLANSAQITGRHGKLCSVLSNTSPGDSGTPYYSGKNVVGIHKGTSELENYNLMIPIPNIPGLTSPDFKFETTNVRGNLYNDEGFRLSVGEDDKAEHWTDRLMKSITFKTKRWADWAEEESESDDERGKVVPPAKPSNYGEGCPPEHNQYLSDVGDLLTKVIGPEQNEKCVDILMGIMGVDKNEVAPHKEEKAEKGNEAVVSATVKTVKEPTTQCDEDIISEIVKRVVDKMNLKAIEKSVVEILAEKAMTKAPRGKRKNSKDTSRPSTPGSYIIPAKRTPDSGPVEKSLNSTGRAKEESPSGARTLPGNIPAWVR.

An N-terminal signal peptide occupies residues 1–25 (MALLGIKLMTLVFAAWLSCCHSSSA). 2 consecutive transmembrane segments (helical) span residues 131–151 (AVGMLLMIIIWIWSSIFLVVY) and 165–185 (AVCVGFLIFCTICAFRLISWI). The Peptidase S39 domain maps to 224 to 416 (VEGYKPFIIP…GLTSPDFKFE (193 aa)). Catalysis depends on for protease activity residues His272, Asp304, and Ser373. 2 disordered regions span residues 463–490 (EEESESDDERGKVVPPAKPSNYGEGCPP) and 595–660 (TKAP…AWVR).

It belongs to the peptidase S39B family.

The protein localises to the host membrane. In terms of biological role, precursor from which the VPg molecule is probably released at the onset of the RNA synthesis. Essential for virus replication. The sequence is that of Genome-linked protein precursor from Euphorbia pulcherrima (Poinsettia).